A 1158-amino-acid chain; its full sequence is Teashirt homolog 1 (1158 aa).

3 disordered regions span residues 70-126 (DDGR…DMDT), 170-228 (INST…ANNG), and 310-341 (TGHY…EMEG). The span at 76-88 (LSYQNSPLSNGTN) shows a compositional bias: polar residues. 2 stretches are compositionally biased toward low complexity: residues 186-205 (SHAS…ASAS) and 213-228 (SSNS…ANNG). C2H2-type zinc fingers lie at residues 288 to 312 (FRCK…ETGH) and 349 to 373 (LKCM…KTKH). A compositionally biased stretch (basic and acidic residues) spans 310-326 (TGHYRDDNKDKEEDRGK). The tract at residues 405–425 (PCSPDSISSTPGIPLAETAPT) is disordered. The segment at 461 to 485 (LKCMECGSSHDTLQQLTAHMMVTGH) adopts a C2H2-type 3 zinc-finger fold. Disordered stretches follow at residues 516–573 (PPTT…VEKS), 656–681 (LKSL…NHKS), and 693–748 (VTGK…VDKD). The span at 555–573 (EEKKIKQEKEDPSERVEKS) shows a compositional bias: basic and acidic residues. Residues 656 to 671 (LKSLTSDSSTLIHSPS) are compositionally biased toward low complexity. Composition is skewed to basic and acidic residues over residues 693–716 (VTGK…KHLT) and 724–748 (LKER…VDKD). Positions 963–1033 (RKGRQSNWNP…NVKYQLRRTG (71 aa)) form a DNA-binding region, homeobox. C2H2-type zinc fingers lie at residues 1048-1070 (FLCS…LESH) and 1115-1138 (FQCK…SKTH).

The protein belongs to the teashirt C2H2-type zinc-finger protein family.

The protein localises to the nucleus. Its function is as follows. Probable transcriptional regulator involved in developmental processes. May act as a transcriptional repressor (Potential). This Danio rerio (Zebrafish) protein is Teashirt homolog 1 (tshz1).